Consider the following 615-residue polypeptide: Peptidoglycan-binding protein YepA (615 aa).

The signal sequence occupies residues 1–26 (MRNLAALLPALFLLGSSLLPAGTALA).

Belongs to the bacterial solute-binding protein 5 family. As to quaternary structure, the complex is composed of one ATP-binding protein (YejF), two transmembrane proteins (YejB and YejE) and a solute-binding protein (YepA).

Its subcellular location is the periplasm. In terms of biological role, part of the ABC transporter complex YejBEF-YepA involved in the uptake of muropeptides, the breakdown products of cell wall peptidoglycan. The import of muropeptides into the cell enables peptidoglycan recycling, which is vital for cell wall integrity in this bacterium. Probably binds muropeptides. This chain is Peptidoglycan-binding protein YepA, found in Agrobacterium fabrum (strain C58 / ATCC 33970) (Agrobacterium tumefaciens (strain C58)).